A 495-amino-acid chain; its full sequence is Cytochrome P450 monooxygenase BOA4 (495 aa).

Residues 12-31 (LANSNTVIAGCIVFALYYLF) form a helical membrane-spanning segment. Asn-115 carries an N-linked (GlcNAc...) asparagine glycan. Cys-439 is a heme binding site.

It belongs to the cytochrome P450 family. It depends on heme as a cofactor.

It localises to the membrane. Its pathway is polyketide biosynthesis. In terms of biological role, cytochrome P450 monooxygenase; part of the gene cluster A that mediates the biosynthesis of botcinic acid and its botcinin derivatives, acetate-derived polyketides that contribute to virulence when combined with the sesquiterpene botrydial. Botcinic acid and its derivatives have been shown to induce chlorosis and necrosis during host plant infection, but also have antifungal activities. Two polyketide synthases, BOA6 and BOA9, are involved in the biosynthesis of botcinins. BOA6 mediates the formation of the per-methylated tetraketide core by condensation of four units of malonyl-CoA with one unit of acetyl-CoA, which would be methylated in activated methylene groups to yield a bicyclic acid intermediate that could then either be converted to botrylactone derivatives or lose the starter acetate unit through a retro-Claisen type C-C bond cleavage to yield botcinin derivatives. The second polyketide synthase, BOA9, is probably required for the biosynthesis of the tetraketide side chain of botcinins. The methyltransferase (MT) domain within BOA6 is probably responsible for the incorporation of four methyl groups. The trans-enoyl reductase BOA5 might take over the enoyl reductase function of BOA6 that misses an ER domain. The monooxygenases BOA2, BOA3 and BOA4 might be involved in further hydroxylations at C4, C5 and C8, whereas BOA7, close to BOA9, could potentially be involved in the hydroxylation at C4 in the side chain of botcinins. This Botryotinia fuckeliana (strain B05.10) (Noble rot fungus) protein is Cytochrome P450 monooxygenase BOA4.